The sequence spans 191 residues: Protein Ves (191 aa).

The protein belongs to the Ves family.

The chain is Protein Ves from Escherichia coli (strain SMS-3-5 / SECEC).